We begin with the raw amino-acid sequence, 434 residues long: UDP-N-acetylenolpyruvoylglucosamine reductase (434 aa).

Residues 51–238 (IGAAPAGVVE…TAVEFQLTTD (188 aa)) form the FAD-binding PCMH-type domain. The active site involves Arg-216. The active-site Proton donor is Ser-299. The active site involves Glu-425.

Belongs to the MurB family. The cofactor is FAD.

Its subcellular location is the cytoplasm. It catalyses the reaction UDP-N-acetyl-alpha-D-muramate + NADP(+) = UDP-N-acetyl-3-O-(1-carboxyvinyl)-alpha-D-glucosamine + NADPH + H(+). The protein operates within cell wall biogenesis; peptidoglycan biosynthesis. Functionally, cell wall formation. In Corynebacterium jeikeium (strain K411), this protein is UDP-N-acetylenolpyruvoylglucosamine reductase.